The primary structure comprises 714 residues: Protein spire homolog 2 (714 aa).

The 182-residue stretch at 22–203 (LSLEEVLKAY…RALFVETLEL (182 aa)) folds into the KIND domain. Residues 136-162 (DSEDSGCGAADEGYGGPEEEEEAEGVP) are disordered. WH2 domains are found at residues 248-262 (QLMRELRRGVKLKKV), 278-296 (PFEMLMQDIRARNYKLRKV), and 342-359 (LHEKILEEIKQERRLRPV). Residues S371, S440, S442, and S476 each carry the phosphoserine modification. The disordered stretch occupies residues 453–516 (VASGLQSATH…SSGDRPEASM (64 aa)). A compositionally biased stretch (polar residues) spans 486–496 (DQGTCPASVSD). Positions 534-554 (LALTVEEVMDVRRVLVKAEME) are spir-box.

This sequence belongs to the spire family.

The protein localises to the cytoplasm. Its subcellular location is the cytoskeleton. It localises to the cytosol. It is found in the cell membrane. The protein resides in the cytoplasmic vesicle membrane. Acts as an actin nucleation factor, remains associated with the slow-growing pointed end of the new filament. Involved in intracellular vesicle transport along actin fibers, providing a novel link between actin cytoskeleton dynamics and intracellular transport. Required for asymmetric spindle positioning and asymmetric cell division during meiosis. Required for normal formation of the cleavage furrow and for polar body extrusion during female germ cell meiosis. Also acts in the nucleus: together with SPIRE1 and SPIRE2, promotes assembly of nuclear actin filaments in response to DNA damage in order to facilitate movement of chromatin and repair factors after DNA damage. The sequence is that of Protein spire homolog 2 (SPIRE2) from Homo sapiens (Human).